The primary structure comprises 319 residues: Peroxidase 13 (319 aa).

A signal peptide spans 1-22 (MITIALFLVLLYFHDQLGYSAA). 4 cysteine pairs are disulfide-bonded: Cys33-Cys111, Cys66-Cys71, Cys117-Cys315, and Cys196-Cys222. The active-site Proton acceptor is the His64. Residues Asp65, Val68, Gly70, Asp72, and Ser74 each coordinate Ca(2+). Pro158 serves as a coordination point for substrate. His189 is a heme b binding site. Thr190 lines the Ca(2+) pocket. Residues Asp235, Ser238, and Asp243 each contribute to the Ca(2+) site. N-linked (GlcNAc...) asparagine glycosylation is present at Asn280.

This sequence belongs to the peroxidase family. Classical plant (class III) peroxidase subfamily. It depends on heme b as a cofactor. Ca(2+) is required as a cofactor.

The protein resides in the secreted. The enzyme catalyses 2 a phenolic donor + H2O2 = 2 a phenolic radical donor + 2 H2O. Functionally, removal of H(2)O(2), oxidation of toxic reductants, biosynthesis and degradation of lignin, suberization, auxin catabolism, response to environmental stresses such as wounding, pathogen attack and oxidative stress. These functions might be dependent on each isozyme/isoform in each plant tissue. The protein is Peroxidase 13 (PER13) of Arabidopsis thaliana (Mouse-ear cress).